We begin with the raw amino-acid sequence, 238 residues long: Small ribosomal subunit protein uS3 (238 aa).

One can recognise a KH type-2 domain in the interval 39–107 (MREFIHDYAK…ELHLNIVEIR (69 aa)). Basic and acidic residues predominate over residues 212–222 (PQAHDRRHSEA). Residues 212-238 (PQAHDRRHSEAQEGAAPRPPRRDRERA) form a disordered region.

The protein belongs to the universal ribosomal protein uS3 family. As to quaternary structure, part of the 30S ribosomal subunit. Forms a tight complex with proteins S10 and S14.

Functionally, binds the lower part of the 30S subunit head. Binds mRNA in the 70S ribosome, positioning it for translation. The chain is Small ribosomal subunit protein uS3 from Cereibacter sphaeroides (strain ATCC 17029 / ATH 2.4.9) (Rhodobacter sphaeroides).